Here is a 385-residue protein sequence, read N- to C-terminus: MLLPRRCWGPWLAGRRPRCSCQSPAGFSGKDRRSSRVREKPPWRVLFFGTDHFAREALRALHAARDNKEEKLIEKLEVVTVPSISPKGLPVKQYAIQSQLPVYEWPDMGSGEYDVGVVASFGRLLSEALILKFPYGILNVHPSCLPRWRGPAPIIHTVLHGDTVTGVTIMQVRPKRFDVGPILKQETVAVPPKSTSKELEAVLSKLGANMLISVLKNLPESLNNGRPQPAEGVTYAPKVSAGTSCVKWEEQTSEQVLRLHLAIGDIVPLQTLWMENTVKLLDLVEVNNSILADPKVMGQTVTPGSVVYHRPSQMLLVHCKDGWIGVRSIMHKKTLTATDFYNGYLHAWYQKNSHAYPSQCKFQTLRLPTKTQQKTKLLLCSALSS.

It belongs to the Fmt family.

It localises to the mitochondrion. The catalysed reaction is L-methionyl-tRNA(fMet) + (6R)-10-formyltetrahydrofolate = N-formyl-L-methionyl-tRNA(fMet) + (6S)-5,6,7,8-tetrahydrofolate + H(+). Functionally, methionyl-tRNA formyltransferase that formylates methionyl-tRNA in mitochondria and is crucial for translation initiation. The sequence is that of Methionyl-tRNA formyltransferase, mitochondrial (Mtfmt) from Rattus norvegicus (Rat).